An 898-amino-acid polypeptide reads, in one-letter code: Cip1-interacting zinc finger protein (898 aa).

3 disordered regions span residues 48–69 (QAPL…QPLL), 157–305 (QSLL…ALEA), and 318–471 (VQAQ…QPQV). Residues 170 to 203 (NPSQFNLSGRNPQKQARTSSSTTPNRKDSSSQTM) show a composition bias toward polar residues. Phosphoserine is present on S209. T244 carries the phosphothreonine modification. A compositionally biased stretch (basic and acidic residues) spans 263–273 (RSSEEPTEKEP). K280 participates in a covalent cross-link: Glycyl lysine isopeptide (Lys-Gly) (interchain with G-Cter in SUMO2). A compositionally biased stretch (low complexity) spans 318-327 (VQAQVQSQTQ). Over residues 328 to 351 (PRIPSTDTQVQPKLQKQAQTQTSP) the composition is skewed to polar residues. K340 is covalently cross-linked (Glycyl lysine isopeptide (Lys-Gly) (interchain with G-Cter in SUMO2)). S350 is subject to Phosphoserine. A compositionally biased stretch (low complexity) spans 355–383 (VLQQKQVQPQLQQEAEPQKQVQPQVQPQA). Residues 384-395 (HSQGPRQVQLQQ) are compositionally biased toward polar residues. K401 is covalently cross-linked (Glycyl lysine isopeptide (Lys-Gly) (interchain with G-Cter in SUMO2)). Over residues 402-435 (QVQPQVQPQAHSQPPRQVQLQLQKQVQTQTYPQV) the composition is skewed to low complexity. Residues 436–445 (HTQAQPSVQP) show a composition bias toward polar residues. S547 is subject to Phosphoserine. Residue K549 forms a Glycyl lysine isopeptide (Lys-Gly) (interchain with G-Cter in SUMO2) linkage. Residues 562–584 (STVPLTPVPRPSDSVSSTPAATS) are disordered. T567 carries the phosphothreonine modification. Positions 572-584 (PSDSVSSTPAATS) are enriched in low complexity. Glycyl lysine isopeptide (Lys-Gly) (interchain with G-Cter in SUMO2) cross-links involve residues K588, K680, and K705. The Matrin-type zinc finger occupies 799-830 (YICRICHKFYHSNSGAQLSHCKSLGHFENLQK). S821 is subject to Phosphoserine. K830 is covalently cross-linked (Glycyl lysine isopeptide (Lys-Gly) (interchain with G-Cter in SUMO2)). S838 is modified (phosphoserine). The span at 859–879 (LFTSSGRPPSQPNTQDKTPSK) shows a compositional bias: polar residues. A disordered region spans residues 859–898 (LFTSSGRPPSQPNTQDKTPSKVTARPSQPPLPRRSTRLKT). Residue K879 forms a Glycyl lysine isopeptide (Lys-Gly) (interchain with G-Cter in SUMO2) linkage.

As to quaternary structure, interacts with CIP/WAF1.

The protein resides in the nucleus. Its function is as follows. May regulate the subcellular localization of CIP/WAF1. The polypeptide is Cip1-interacting zinc finger protein (CIZ1) (Homo sapiens (Human)).